We begin with the raw amino-acid sequence, 1648 residues long: Pleiotropic ABC efflux transporter of multiple drugs YBT1 (1648 aa).

Residues 28–48 form a helical membrane-spanning segment; sequence NYVPTTLVTISILILLHNFFI. Residue Asn-72 is glycosylated (N-linked (GlcNAc...) asparagine). Helical transmembrane passes span 140 to 160, 175 to 195, 207 to 227, and 250 to 270; these read VVIE…LSIE, PHVL…LNLN, NIWL…ILPF, and LNLV…LPVL. An N-linked (GlcNAc...) asparagine glycan is attached at Asn-306. 2 helical membrane-spanning segments follow: residues 352–372 and 392–412; these read FLNL…SIFV and MNLA…VAIC. In terms of domain architecture, ABC transmembrane type-1 1 spans 361–674; sequence CFTTISAFSI…ISDMLSYLIQ (314 aa). Asn-471 carries N-linked (GlcNAc...) asparagine glycosylation. 2 helical membrane passes run 501–521 and 523–543; these read ISEL…LTVS and ILLY…TIII. An N-linked (GlcNAc...) asparagine glycan is attached at Asn-573. 2 helical membrane-spanning segments follow: residues 612-632 and 643-662; these read VWCV…GCTF and LTTP…RDPL. The ABC transporter 1 domain maps to 706–947; it reads LAFENVTLRW…GLLGEDENMK (242 aa). N-linked (GlcNAc...) asparagine glycosylation occurs at Asn-710. Residue 741–748 coordinates ATP; the sequence is GATGSGKT. N-linked (GlcNAc...) asparagine glycosylation is found at Asn-784 and Asn-798. A helical membrane pass occupies residues 1012-1032; sequence MYGGWYTIVALASVFTAILCL. Positions 1032–1333 constitute an ABC transmembrane type-1 2 domain; sequence LQITQAWWIR…LVRQYSELEM (302 aa). An N-linked (GlcNAc...) asparagine glycan is attached at Asn-1042. The next 3 helical transmembrane spans lie at 1089–1109, 1168–1188, and 1191–1211; these read IAKF…IGSI, IQSV…ISYI, and AFFP…FFYL. A glycan (N-linked (GlcNAc...) asparagine) is linked at Asn-1255. The next 2 helical transmembrane spans lie at 1282–1302 and 1305–1325; these read LIGA…INNI and GLAG…LWLV. An ABC transporter 2 domain is found at 1372 to 1622; sequence VEVNNLSLKY…KKSIFYNMCE (251 aa). A glycan (N-linked (GlcNAc...) asparagine) is linked at Asn-1376. 1406–1413 contacts ATP; it reads GRTGAGKS. N-linked (GlcNAc...) asparagine glycosylation is found at Asn-1503, Asn-1524, and Asn-1573.

It belongs to the ABC transporter superfamily. ABCC family. Conjugate transporter (TC 3.A.1.208) subfamily.

It localises to the membrane. Functionally, pleiotropic ABC efflux transporter that might be involved in the resistance to azoles such as fluconazole. The protein is Pleiotropic ABC efflux transporter of multiple drugs YBT1 of Candida glabrata (strain ATCC 2001 / BCRC 20586 / JCM 3761 / NBRC 0622 / NRRL Y-65 / CBS 138) (Yeast).